Here is a 375-residue protein sequence, read N- to C-terminus: DNA replication and repair protein RecF (375 aa).

30–37 (GNNGSGKS) serves as a coordination point for ATP.

The protein belongs to the RecF family.

It localises to the cytoplasm. Its function is as follows. The RecF protein is involved in DNA metabolism; it is required for DNA replication and normal SOS inducibility. RecF binds preferentially to single-stranded, linear DNA. It also seems to bind ATP. The polypeptide is DNA replication and repair protein RecF (Hahella chejuensis (strain KCTC 2396)).